A 280-amino-acid chain; its full sequence is Putative pyruvate, phosphate dikinase regulatory protein (280 aa).

153–160 contributes to the ADP binding site; it reads GISRTSKT.

The protein belongs to the pyruvate, phosphate/water dikinase regulatory protein family. PDRP subfamily.

It carries out the reaction N(tele)-phospho-L-histidyl/L-threonyl-[pyruvate, phosphate dikinase] + ADP = N(tele)-phospho-L-histidyl/O-phospho-L-threonyl-[pyruvate, phosphate dikinase] + AMP + H(+). The catalysed reaction is N(tele)-phospho-L-histidyl/O-phospho-L-threonyl-[pyruvate, phosphate dikinase] + phosphate + H(+) = N(tele)-phospho-L-histidyl/L-threonyl-[pyruvate, phosphate dikinase] + diphosphate. Functionally, bifunctional serine/threonine kinase and phosphorylase involved in the regulation of the pyruvate, phosphate dikinase (PPDK) by catalyzing its phosphorylation/dephosphorylation. This chain is Putative pyruvate, phosphate dikinase regulatory protein, found in Bartonella quintana (strain Toulouse) (Rochalimaea quintana).